Here is a 198-residue protein sequence, read N- to C-terminus: Glycerol-3-phosphate acyltransferase (198 aa).

The next 5 helical transmembrane spans lie at 10–30 (LIPILFASYLIGSIPFSWILV), 57–77 (GISFLVLLLDIFKSVLVILIL), 86–106 (IMYLTGFTVVLGHIFPVWFLF), 118–138 (VVLSINIKIFFLFIITWAVVF), and 160–180 (AVTENFNSSIFYIAMSIIVLI).

This sequence belongs to the PlsY family. Probably interacts with PlsX.

Its subcellular location is the cell inner membrane. It carries out the reaction an acyl phosphate + sn-glycerol 3-phosphate = a 1-acyl-sn-glycero-3-phosphate + phosphate. It participates in lipid metabolism; phospholipid metabolism. Catalyzes the transfer of an acyl group from acyl-phosphate (acyl-PO(4)) to glycerol-3-phosphate (G3P) to form lysophosphatidic acid (LPA). This enzyme utilizes acyl-phosphate as fatty acyl donor, but not acyl-CoA or acyl-ACP. The sequence is that of Glycerol-3-phosphate acyltransferase from Anaplasma marginale (strain Florida).